We begin with the raw amino-acid sequence, 556 residues long: Oxygen-dependent choline dehydrogenase (556 aa).

Residue 4-33 (DYIIIGAGSAGNVLATRLTEDPNTTVLLLE) coordinates FAD. His473 (proton acceptor) is an active-site residue.

This sequence belongs to the GMC oxidoreductase family. Requires FAD as cofactor.

The catalysed reaction is choline + A = betaine aldehyde + AH2. It carries out the reaction betaine aldehyde + NAD(+) + H2O = glycine betaine + NADH + 2 H(+). The protein operates within amine and polyamine biosynthesis; betaine biosynthesis via choline pathway; betaine aldehyde from choline (cytochrome c reductase route): step 1/1. Functionally, involved in the biosynthesis of the osmoprotectant glycine betaine. Catalyzes the oxidation of choline to betaine aldehyde and betaine aldehyde to glycine betaine at the same rate. The sequence is that of Oxygen-dependent choline dehydrogenase from Escherichia coli O127:H6 (strain E2348/69 / EPEC).